Here is a 1027-residue protein sequence, read N- to C-terminus: Sodium/potassium-transporting ATPase subunit alpha-1 (1027 aa).

A propeptide spanning residues 1–5 (MGVGD) is cleaved from the precursor. A compositionally biased stretch (basic and acidic residues) spans 1–10 (MGVGDGRDQY). The segment at 1 to 39 (MGVGDGRDQYELAAMSEQSGKKKSKNKKEKKEKDMDELK) is disordered. Over 6-90 (GRDQYELAAM…NALTPPPTTP (85 aa)) the chain is Cytoplasmic. Residue Ser-16 is modified to Phosphoserine; by PKC. Basic and acidic residues predominate over residues 29 to 39 (EKKEKDMDELK). Positions 85-87 (PPP) are interaction with phosphoinositide-3 kinase. A helical transmembrane segment spans residues 91–111 (EWVKFCKQMFGGFSMLLWTGA). Residues 112-134 (VLCFLAYGILAAMEDEPANDNLY) lie on the Extracellular side of the membrane. A helical transmembrane segment spans residues 135–155 (LGVVLSAVVIITGCFSYYQDA). Residues 156–291 (KSSKIMDSFK…VGRTPISIEI (136 aa)) lie on the Cytoplasmic side of the membrane. Residues 217 to 238 (DNSSLTGESEPQTRSPDFSNDN) form a disordered region. The chain crosses the membrane as a helical span at residues 292–311 (EHFIHIITGVAVFLGVSFLL). The Extracellular portion of the chain corresponds to 312–323 (LSLVLGYSWLEA). Residues 324-341 (VIFLIGIIVANVPEGLLA) form a helical membrane-spanning segment. The Cytoplasmic portion of the chain corresponds to 342-776 (TVTVCLTLTA…EEGRLIFDNL (435 aa)). Asp-379 (4-aspartylphosphate intermediate) is an active-site residue. ATP is bound at residue Lys-490. Residues Asp-721 and Asp-725 each coordinate Mg(2+). A helical transmembrane segment spans residues 777 to 796 (KKSIAYTLTSNIPEITPFLF). The Extracellular segment spans residues 797–806 (FIIANIPLPL). A helical transmembrane segment spans residues 807–827 (GTVTILCIDLGTDMLPAISLA). Residues 828-847 (YEAAESDIMKRQPRNPKTDK) are Cytoplasmic-facing. The helical transmembrane segment at 848–870 (LVNERLISIAYGQIGMIQALAGF) threads the bilayer. Topologically, residues 871–922 (FTYFVILAENGFLPPRLLGIRMNWDDKYINDLEDSYGQQWTYEQRKIVEFTC) are extracellular. The helical transmembrane segment at 923–942 (HTAFFTSIVIVQWADLIICK) threads the bilayer. Residues 943 to 955 (TRRNSVFQQGMKN) are Cytoplasmic-facing. Ser-947 bears the Phosphoserine; by PKA mark. The helical transmembrane segment at 956–974 (KILIFGLFEETALAAFLSY) threads the bilayer. The Extracellular segment spans residues 975–989 (CPGMDVALRMYPLKP). The chain crosses the membrane as a helical span at residues 990–1010 (NWWFCAFPYSLLIFIYDEIRK). Residues 1011 to 1027 (LILRRNPGGWMERETYY) lie on the Cytoplasmic side of the membrane.

This sequence belongs to the cation transport ATPase (P-type) (TC 3.A.3) family. Type IIC subfamily. In terms of assembly, the sodium/potassium-transporting ATPase is composed of a catalytic alpha subunit, an auxiliary non-catalytic beta subunit and an additional regulatory subunit.

It localises to the cell membrane. It is found in the sarcolemma. It carries out the reaction K(+)(out) + Na(+)(in) + ATP + H2O = K(+)(in) + Na(+)(out) + ADP + phosphate + H(+). Its function is as follows. This is the catalytic component of the active enzyme, which catalyzes the hydrolysis of ATP coupled with the exchange of sodium and potassium ions across the plasma membrane. This action creates the electrochemical gradient of sodium and potassium ions, providing the energy for active transport of various nutrients. The protein is Sodium/potassium-transporting ATPase subunit alpha-1 (atp1a1) of Catostomus commersonii (White sucker).